The sequence spans 212 residues: 3,4-dihydroxy-2-butanone 4-phosphate synthase (212 aa).

D-ribulose 5-phosphate contacts are provided by residues 37–38 (RE), Asp-42, 150–154 (RRGHT), and Glu-174. Glu-38 is a Mg(2+) binding site. His-153 is a Mg(2+) binding site.

It belongs to the DHBP synthase family. Homodimer. It depends on Mg(2+) as a cofactor. Mn(2+) serves as cofactor.

It catalyses the reaction D-ribulose 5-phosphate = (2S)-2-hydroxy-3-oxobutyl phosphate + formate + H(+). The protein operates within cofactor biosynthesis; riboflavin biosynthesis; 2-hydroxy-3-oxobutyl phosphate from D-ribulose 5-phosphate: step 1/1. Its function is as follows. Catalyzes the conversion of D-ribulose 5-phosphate to formate and 3,4-dihydroxy-2-butanone 4-phosphate. The chain is 3,4-dihydroxy-2-butanone 4-phosphate synthase from Shewanella pealeana (strain ATCC 700345 / ANG-SQ1).